Consider the following 99-residue polypeptide: MKMENLISMFCFSSKGSSKRRTKGSSTWFPQPDQHITIRTFRRLKAHQMLSHTWTKTETSLTMEVSKSMADQLEEVNSLPTTLMPRHSIVDPSYRPSIY.

It belongs to the geminiviridae protein AC4/C4 family.

Its function is as follows. Pathogenicity determinant. May act as a suppressor of RNA-mediated gene silencing, also known as post-transcriptional gene silencing (PTGS), a mechanism of plant viral defense that limits the accumulation of viral RNAs. The sequence is that of Protein AC4 from Glycine max (Soybean).